The following is a 723-amino-acid chain: ADP-ribosylation factor-binding protein GGA3 (723 aa).

The segment at 1–313 (MAEAEGESLE…GEVATLTLPD (313 aa)) is binds to ARF1 (in long isoform). The region spanning 16 to 146 (ATNPSNRQED…MLKRQGIVQS (131 aa)) is the VHS domain. Ser-159 and Ser-275 each carry phosphoserine. In terms of domain architecture, GAT spans 171 to 298 (DEEKSKLLAK…VINSYKTIIE (128 aa)). Positions 299–593 (GQVINGEVAT…IHVPLESIKP (295 aa)) are unstructured hinge. The segment at 339–384 (SSVLAPAPTPPSSGIPILPPPPQASGPPRSRSSSQAEATLGPSSTS) is disordered. Residues 345–363 (APTPPSSGIPILPPPPQAS) are compositionally biased toward pro residues. The span at 364–374 (GPPRSRSSSQA) shows a compositional bias: low complexity. Residues 391-395 (DEELL) carry the DXXLL motif. The disordered stretch occupies residues 428-464 (DFFSPRPGTAACGASDAPLLQPSAPSSSSSQAPLPPP). Positions 441-459 (ASDAPLLQPSAPSSSSSQA) are enriched in low complexity. The GAE domain maps to 594 to 715 (SSALPVTAYD…TEVGEVDQFP (122 aa)).

The protein belongs to the GGA protein family. Monomer. Interacts with GGA1 and GGA2. Binds to clathrin and activated ARFs, such as ARF1, ARF5 and ARF6. Binds RABEP1 and RABGEF1. Interacts with the membrane proteins M6PR/CD-MPR and IGF2R/CI-MPR and the accessory proteins SYNRG, EPN4, NECAP1, NECAP2 and AFTPH/aftiphilin. Interacts with TSG101 and UBC. Interacts with ADRA2B. Interacts with NTRK1; the interaction is independent of NTRK1 activation and ubiquitination. Interacts (via VHS domain) with BACE1 (via DXXLL motif). Post-translationally, phosphorylated by CK2 and dephosphorylated by PP2A. Phosphorylation of GGA3 allows the internal DXXLL motif to bind the VHS domain and to inhibit the recognition of cargo signals. In terms of processing, ubiquitinated. Proteolytically cleaved during apoptosis by CASP3. In terms of tissue distribution, ubiquitously expressed.

It is found in the golgi apparatus. Its subcellular location is the trans-Golgi network membrane. The protein resides in the endosome membrane. The protein localises to the early endosome membrane. It localises to the recycling endosome membrane. Plays a role in protein sorting and trafficking between the trans-Golgi network (TGN) and endosomes. Mediates the ARF-dependent recruitment of clathrin to the TGN and binds ubiquitinated proteins and membrane cargo molecules with a cytosolic acidic cluster-dileucine (DXXLL) motif. Mediates export of the GPCR receptor ADRA2B to the cell surface. nvolved in BACE1 transport and sorting as well as regulation of BACE1 protein levels. Regulates retrograde transport of BACE1 from endosomes to the trans-Golgi network via interaction through the VHS motif and dependent of BACE1 phosphorylation. Modulates BACE1 protein levels independently of the interaction between VHS domain and DXXLL motif through recognition of ubiquitination. Key player in a novel DXXLL-mediated endosomal sorting machinery to the recycling pathway that targets NTRK1 to the plasma membrane. The protein is ADP-ribosylation factor-binding protein GGA3 of Homo sapiens (Human).